Here is a 300-residue protein sequence, read N- to C-terminus: uncharacterized protein (300 aa).

Residues 67–179 (LAFEELEKEK…IAKANELKDS (113 aa)) adopt a coiled-coil conformation. Positions 203 to 285 (STTASLSQSE…PSSQSTYQQQ (83 aa)) are enriched in low complexity. The interval 203 to 300 (STTASLSQSE…KGFFARLFNL (98 aa)) is disordered.

This is an uncharacterized protein from Staphylococcus epidermidis (strain ATCC 12228 / FDA PCI 1200).